The following is a 434-amino-acid chain: MSFNTIIDWNSCTAEQQRQLLMRPAISTSESITRTVNDILDNVKARGDEALREYSAKFDKTTVTALTVSAEEIAAASERLSDELKQAMAVAVKNIETFHTAQKLPPVDVETQPGVRCQQVTRPVASVGLYIPGGSAPLFSTVLMLATPARIAGCKKVVLCSPPPIADEILYAAQLCGVQDVFNVGGAQAIAALAFGTESVPKVDKIFGPGNAFVTEAKRQVSQRLDGAAIDMPAGPSEVLVIADSGATPDFVASDLLSQAEHGPDSQVILLTPAADMARRVAEAVERQLAELPRAETARQALSASRLIVTKDLAQCVEISNQYGPEHLIIQTRNARVLVDGITSAGSVFLGDWSPESAGDYASGTNHVLPTYGYTATCSSLGLADFQKRMTVQELSKEGFSALASTIETLAAAERLTAHKNAVTLRVNALKEQA.

Residues tyrosine 130, glutamine 188, and asparagine 211 each contribute to the NAD(+) site. Substrate contacts are provided by serine 237, glutamine 259, and histidine 262. Zn(2+) contacts are provided by glutamine 259 and histidine 262. Catalysis depends on proton acceptor residues glutamate 326 and histidine 327. Residues histidine 327, aspartate 360, glutamate 414, and histidine 419 each coordinate substrate. Aspartate 360 is a Zn(2+) binding site. Histidine 419 serves as a coordination point for Zn(2+).

It belongs to the histidinol dehydrogenase family. As to quaternary structure, homodimer. Zn(2+) is required as a cofactor.

The enzyme catalyses L-histidinol + 2 NAD(+) + H2O = L-histidine + 2 NADH + 3 H(+). The protein operates within amino-acid biosynthesis; L-histidine biosynthesis; L-histidine from 5-phospho-alpha-D-ribose 1-diphosphate: step 9/9. Functionally, catalyzes the sequential NAD-dependent oxidations of L-histidinol to L-histidinaldehyde and then to L-histidine. The polypeptide is Histidinol dehydrogenase (Shigella dysenteriae serotype 1 (strain Sd197)).